The chain runs to 169 residues: Der GTPase-activating protein YihI (169 aa).

Disordered regions lie at residues 1-99 (MKPS…QAEL) and 146-169 (SYDD…LRGN). Basic residues predominate over residues 10–19 (SKGHAKARRK). Residues 20–30 (TREELDQEARD) are compositionally biased toward basic and acidic residues. The span at 31-40 (RKRQKKRRGH) shows a compositional bias: basic residues. Positions 49-58 (GNTTSGSKGQ) are enriched in polar residues. The span at 147 to 159 (YDDDEEEEEDEKQ) shows a compositional bias: acidic residues. The span at 160–169 (EDMMRLLRGN) shows a compositional bias: basic and acidic residues.

Belongs to the YihI family. In terms of assembly, interacts with Der.

Its function is as follows. A GTPase-activating protein (GAP) that modifies Der/EngA GTPase function. May play a role in ribosome biogenesis. The chain is Der GTPase-activating protein YihI from Escherichia coli O81 (strain ED1a).